Reading from the N-terminus, the 200-residue chain is Small heat shock protein hspG2 (200 aa).

The sHSP domain maps to 33 to 200 (NKRIDIIPSM…DNFQIKLKSI (168 aa)). A disordered region spans residues 86–139 (KLQQQQQQQSEKSSQSTNNKDDDEPSIEEYEDDTKLKSNLNKNTENKDENKTTS). A compositionally biased stretch (low complexity) spans 88-101 (QQQQQQQSEKSSQS). Over residues 106–117 (DDDEPSIEEYED) the composition is skewed to acidic residues.

Belongs to the small heat shock protein (HSP20) family.

The sequence is that of Small heat shock protein hspG2 (hspG2) from Dictyostelium discoideum (Social amoeba).